A 360-amino-acid chain; its full sequence is Protein NDRG2 (360 aa).

The segment at 324–360 (SRTASLSSEGNRSRSRTLSQSSESGGGPPAPLAEVTC) is disordered.

The protein belongs to the NDRG family.

It is found in the cytoplasm. Functionally, contributes to the regulation of the Wnt signaling pathway. Down-regulates CTNNB1-mediated transcriptional activation of target genes. May be involved in neuron differentiation. The sequence is that of Protein NDRG2 (ndrg2) from Xenopus laevis (African clawed frog).